Reading from the N-terminus, the 348-residue chain is MKKITLIRPDDWHCHLRDGSYLPRTVADIAAQFNRAIVMPNLVPPITTVQQAKAYYDRIKAHVPKSSNFEPLMTLYLTESTPQQEIKAAQQSGIIVACKLYPAGATTHSQAGVKDLKAIYTLLETMQSVDLPLLIHGEVVDYAVDIFDREAVFIERELLPLVETFPQLRIVFEHISTKIAVDFVLEAPSKLGATITPHHLLFNRNDLLSGSIRPHYYCLPILKTSEDQMALIQAATSGNPKFFLGTDSAPHSQTKKQSICGSAGIYNAPAAIALYAEIFASQNALDKLEGFASRFGAEFYGLPLNNSQITLIHQPWQVAESLPFGNELVVPLFAGQTLQWQIKSHEHK.

Positions 13 and 15 each coordinate Zn(2+). Residues 15–17 and asparagine 41 each bind substrate; that span reads HLR. Residues lysine 99, histidine 136, and histidine 174 each contribute to the Zn(2+) site. An N6-carboxylysine modification is found at lysine 99. Histidine 136 provides a ligand contact to substrate. Leucine 219 contributes to the substrate binding site. Position 247 (aspartate 247) interacts with Zn(2+). Residue aspartate 247 is part of the active site. Positions 251 and 263 each coordinate substrate.

This sequence belongs to the metallo-dependent hydrolases superfamily. DHOase family. Class II DHOase subfamily. Homodimer. Requires Zn(2+) as cofactor.

The enzyme catalyses (S)-dihydroorotate + H2O = N-carbamoyl-L-aspartate + H(+). It functions in the pathway pyrimidine metabolism; UMP biosynthesis via de novo pathway; (S)-dihydroorotate from bicarbonate: step 3/3. Its function is as follows. Catalyzes the reversible cyclization of carbamoyl aspartate to dihydroorotate. The sequence is that of Dihydroorotase from Coxiella burnetii (strain RSA 331 / Henzerling II).